The primary structure comprises 223 residues: Uracil-DNA glycosylase (223 aa).

Asp-67 serves as the catalytic Proton acceptor.

It belongs to the uracil-DNA glycosylase (UDG) superfamily. UNG family.

The protein localises to the cytoplasm. It carries out the reaction Hydrolyzes single-stranded DNA or mismatched double-stranded DNA and polynucleotides, releasing free uracil.. Its function is as follows. Excises uracil residues from the DNA which can arise as a result of misincorporation of dUMP residues by DNA polymerase or due to deamination of cytosine. The chain is Uracil-DNA glycosylase from Borrelia turicatae (strain 91E135).